Reading from the N-terminus, the 539-residue chain is Probable protein kinase UbiB (539 aa).

The Protein kinase domain maps to 125–493; that stretch reads RFDVEPLASA…RRRQGDRWAL (369 aa). Residues 131 to 139 and Lys-153 contribute to the ATP site; that span reads LASASVAQV. Asp-288 acts as the Proton acceptor in catalysis. 2 helical membrane passes run 495 to 515 and 517 to 537; these read LLGAGLLGGGAVLAASAAEAA and LAAPAAWPAWLMLAAGLYLIV.

Belongs to the ABC1 family. UbiB subfamily.

It is found in the cell inner membrane. The protein operates within cofactor biosynthesis; ubiquinone biosynthesis [regulation]. In terms of biological role, is probably a protein kinase regulator of UbiI activity which is involved in aerobic coenzyme Q (ubiquinone) biosynthesis. This Pseudomonas putida (strain W619) protein is Probable protein kinase UbiB.